The chain runs to 710 residues: MEVELEIKGKKLVLQTGIFAKQTNGSVLAKYGDTYVLCTVVAEKTPKEGLDFVPLTIDYQEKAYSAGKIPGGFFKREGKPTDREILVSRLIDRPVRPLFPDGFNYETQGIASVLSYGDENIADILSIIGISSALTISDIPFNGPVAAVRVGMVEEEFILNPDNDEAEKSILNLVVAGTEEAVTMVEGGAAECSEETLVEALKFAHTHIKKIIALQKKLQQLSGKPKREIISLNGDEEIQKAILNIIGGKIENALFLPKKVERQQALDELLNECLQNLNTEEFRQKLYGNFDKDISLEITNAFDKVIKKFMRESIVKKGIRADGRKSDEIRPITCMIGILPRVHGSALFTRGETQALVATTLGTSEDEQKVDSLEGEIFKTFMLHYNFLPFSVGEVKPLRAPGRREIGHGYLAERALSYVIPSKDEFPYTIRVVSDILESNGSSSMATVCGATLSLMDAGVPIKAPVAGVAMGLIKEGDKTVVLTDILGMEDHYGDMDFKVAGTEKGITAFQMDVKISGISYEIFKKALKQAKQARLFILKKMAETISEPKKELSLYAPRIYKIQVKPEKIRDIIGTGGKVIKGIIEETGVKIDIEDKEGIVKIASSNESAAQKAIEIIKGITQEAELGRIYMGKVTRIVDFGAFVEIMPGVEGLLHISQIADKRIQKVSEVLKTGEQIPVKVIEIDELGRVRLSRKEALREIENRTATKT.

Mg(2+) contacts are provided by aspartate 491 and aspartate 497. The KH domain occupies 558 to 618 (PRIYKIQVKP…SAAQKAIEII (61 aa)). In terms of domain architecture, S1 motif spans 628 to 696 (GRIYMGKVTR…ELGRVRLSRK (69 aa)).

This sequence belongs to the polyribonucleotide nucleotidyltransferase family. Mg(2+) is required as a cofactor.

The protein localises to the cytoplasm. It carries out the reaction RNA(n+1) + phosphate = RNA(n) + a ribonucleoside 5'-diphosphate. Its function is as follows. Involved in mRNA degradation. Catalyzes the phosphorolysis of single-stranded polyribonucleotides processively in the 3'- to 5'-direction. This Thermodesulfovibrio yellowstonii (strain ATCC 51303 / DSM 11347 / YP87) protein is Polyribonucleotide nucleotidyltransferase.